The following is a 598-amino-acid chain: tRNA(Met) cytidine acetyltransferase TmcA (598 aa).

ATP is bound by residues glutamine 141, 163-172, and arginine 288; that span reads GRGKSTLAGK. Residues 332–490 form the N-acetyltransferase domain; sequence TDLRRLFDAD…HSAMMLYPLS (159 aa). Acetyl-CoA is bound by residues 411-413, 418-424, and arginine 462; these read IAV and QNQGIGS.

The protein belongs to the RNA cytidine acetyltransferase family. TmcA subfamily.

The protein resides in the cytoplasm. The catalysed reaction is cytidine(34) in elongator tRNA(Met) + acetyl-CoA + ATP + H2O = N(4)-acetylcytidine(34) in elongator tRNA(Met) + ADP + phosphate + CoA + H(+). Its function is as follows. Catalyzes the formation of N(4)-acetylcytidine (ac(4)C) at the wobble position of tRNA(Met), by using acetyl-CoA as an acetyl donor and ATP (or GTP). This chain is tRNA(Met) cytidine acetyltransferase TmcA, found in Haemophilus ducreyi (strain 35000HP / ATCC 700724).